A 270-amino-acid polypeptide reads, in one-letter code: Pantoate kinase (270 aa).

The protein belongs to the GHMP kinase family. PoK subfamily.

It catalyses the reaction (R)-pantoate + ATP = (R)-4-phosphopantoate + ADP + H(+). Its pathway is cofactor biosynthesis; coenzyme A biosynthesis. Functionally, phosphorylates (R)-pantoate to form (R)-4-phosphopantoate in the CoA biosynthesis pathway. The protein is Pantoate kinase of Methanocaldococcus jannaschii (strain ATCC 43067 / DSM 2661 / JAL-1 / JCM 10045 / NBRC 100440) (Methanococcus jannaschii).